Consider the following 1048-residue polypeptide: Putative helicase/primase complex protein (1048 aa).

The tract at residues 1025-1048 (STKEESSPTREETSSIKEKTFTET) is disordered.

Belongs to the asfivirus F1055L family.

May be involved in DNA replication. In African swine fever virus (isolate Pig/Kenya/KEN-50/1950) (ASFV), this protein is Putative helicase/primase complex protein.